The primary structure comprises 396 residues: Tryptophan synthase beta chain (396 aa).

Lys88 carries the N6-(pyridoxal phosphate)lysine modification.

Belongs to the TrpB family. As to quaternary structure, tetramer of two alpha and two beta chains. The cofactor is pyridoxal 5'-phosphate.

It catalyses the reaction (1S,2R)-1-C-(indol-3-yl)glycerol 3-phosphate + L-serine = D-glyceraldehyde 3-phosphate + L-tryptophan + H2O. Its pathway is amino-acid biosynthesis; L-tryptophan biosynthesis; L-tryptophan from chorismate: step 5/5. Functionally, the beta subunit is responsible for the synthesis of L-tryptophan from indole and L-serine. This Shewanella sp. (strain MR-7) protein is Tryptophan synthase beta chain.